The following is a 485-amino-acid chain: Protein hunchback (485 aa).

Positions 1–77 (TSSTARKTPE…EEDDDIRTPK (77 aa)) are disordered. The segment covering 16 to 37 (QDQNQLLKTPIQTNGNQQSTFD) has biased composition (polar residues). The span at 59–72 (ADVDDENDAEEDDD) shows a compositional bias: acidic residues. 4 consecutive C2H2-type zinc fingers follow at residues 87–109 (YKCK…NRIH), 116–138 (LKCQ…LRNH), 144–166 (FQCK…MKSH), and 172–196 (YRCK…KYSH). 3 disordered regions span residues 229 to 270 (KDEG…PPSS), 318 to 361 (NGWQ…QVKH), and 398 to 422 (PKPV…EDDS). The span at 257 to 270 (NFEQSQHVPTPPSS) shows a compositional bias: polar residues. Acidic residues predominate over residues 325-335 (NCNEEETPEKE). A compositionally biased stretch (polar residues) spans 345 to 358 (DLSSNPSTPSTVSQ). The segment covering 402–416 (QLQLPTSSTTTPLKT) has biased composition (low complexity). 2 C2H2-type zinc fingers span residues 432–454 (YECK…MGYH) and 460–484 (FKCN…RDAH).

Belongs to the hunchback C2H2-type zinc-finger protein family.

The protein localises to the nucleus. In terms of biological role, gap class segmentation protein that controls development of head structures. The chain is Protein hunchback (hb) from Clogmia albipunctata (Mothmidge).